Consider the following 392-residue polypeptide: Formate-dependent phosphoribosylglycinamide formyltransferase (392 aa).

N(1)-(5-phospho-beta-D-ribosyl)glycinamide-binding positions include 22–23 (EL) and glutamate 82. ATP-binding positions include arginine 114, lysine 155, 160–165 (SSGKGQ), 195–198 (EGVV), and glutamate 203. The 190-residue stretch at 119-308 (RLAAEELQLP…EFALHVRAFL (190 aa)) folds into the ATP-grasp domain. Glutamate 267 and glutamate 279 together coordinate Mg(2+). N(1)-(5-phospho-beta-D-ribosyl)glycinamide is bound by residues aspartate 286, lysine 355, and 362-363 (RR).

It belongs to the PurK/PurT family. In terms of assembly, homodimer.

It catalyses the reaction N(1)-(5-phospho-beta-D-ribosyl)glycinamide + formate + ATP = N(2)-formyl-N(1)-(5-phospho-beta-D-ribosyl)glycinamide + ADP + phosphate + H(+). It functions in the pathway purine metabolism; IMP biosynthesis via de novo pathway; N(2)-formyl-N(1)-(5-phospho-D-ribosyl)glycinamide from N(1)-(5-phospho-D-ribosyl)glycinamide (formate route): step 1/1. Involved in the de novo purine biosynthesis. Catalyzes the transfer of formate to 5-phospho-ribosyl-glycinamide (GAR), producing 5-phospho-ribosyl-N-formylglycinamide (FGAR). Formate is provided by PurU via hydrolysis of 10-formyl-tetrahydrofolate. This chain is Formate-dependent phosphoribosylglycinamide formyltransferase, found in Escherichia coli O1:K1 / APEC.